The sequence spans 496 residues: Nectin 1a (496 aa).

A signal peptide spans 1 to 20 (MMFINLLLRLMCVFLIGADG). Over 21 to 349 (QMVQMESSKA…FQDQQQAGVV (329 aa)) the chain is Extracellular. The region spanning 34-138 (GSQVELPCQF…GNRENMVNLT (105 aa)) is the Ig-like V-type domain. Residues Cys-41 and Cys-121 are joined by a disulfide bond. N-linked (GlcNAc...) asparagine glycosylation is found at Asn-62 and Asn-136. Ig-like C2-type domains are found at residues 143 to 238 (PMIQ…VTLN) and 243 to 330 (PEVI…VIVT). 2 cysteine pairs are disulfide-bonded: Cys-168/Cys-222 and Cys-265/Cys-312. Asn-282 is a glycosylation site (N-linked (GlcNAc...) asparagine). Residues 350-370 (IGGAVVCGTVLLAAVTLLVVF) form a helical membrane-spanning segment. The Cytoplasmic segment spans residues 371–496 (LYRRRCMFKG…SVISKEEWYV (126 aa)).

Belongs to the nectin family. In terms of assembly, cis- and trans-homodimer. Can form trans-heterodimers. In terms of tissue distribution, expressed in the developing eye and nervous system.

The protein localises to the cell membrane. It is found in the cell junction. The protein resides in the adherens junction. Its function is as follows. Cell adhesion molecule that promotes cell-cell contacts and plays important roles in the development of the nervous system. Acts by forming homophilic or heterophilic trans-dimers. This is Nectin 1a from Danio rerio (Zebrafish).